We begin with the raw amino-acid sequence, 248 residues long: Tetraspanin-18 (248 aa).

Residues 1–13 are Cytoplasmic-facing; sequence MEGDCLSCMKYLM. A helical transmembrane segment spans residues 14–34; sequence FVFNFFIFLGGACLLAIGIWV. At 35–49 the chain is on the extracellular side; it reads MVDPTGFREIVAANP. The helical transmembrane segment at 50 to 70 threads the bilayer; the sequence is LLLTGAYILLAMGGLLFLLGF. Over 71 to 83 the chain is Cytoplasmic; that stretch reads LGCCGAVRENKCL. A helical membrane pass occupies residues 84 to 104; the sequence is LLFFFLFILIIFLAELSAAIL. Residues 105-223 lie on the Extracellular side of the membrane; it reads AFIFRENLTR…TFETYVYLAG (119 aa). 2 N-linked (GlcNAc...) asparagine glycosylation sites follow: Asn111 and Asn129. Residues 224–244 form a helical membrane-spanning segment; it reads ALAIGVLAIELFAMIFAMCLF. The Cytoplasmic portion of the chain corresponds to 245 to 248; it reads RGIQ.

It belongs to the tetraspanin (TM4SF) family. Interacts with ORAI1; this interaction regulates ORAI1 exit from the endoplasmic (ER), and/or Golgi, and trafficking to the cell surface. Highly expressed in primary endothelial cells. Expressed in the embryo heart. Weakly expressed the embryo skeletal muscle.

The protein resides in the membrane. Functionally, plays a role in the cell surface localization of ORAI1 and may participate in the regulation of Ca(2+) signaling and the VWF release in response to inflammatory stimuli. This chain is Tetraspanin-18, found in Homo sapiens (Human).